A 417-amino-acid chain; its full sequence is Tyrosine--tRNA ligase (417 aa).

Tyr39 serves as a coordination point for L-tyrosine. Positions 44 to 53 (PTAPSLHAGG) match the 'HIGH' region motif. L-tyrosine-binding residues include Tyr176 and Gln180. Residues 236-240 (KMGKS) carry the 'KMSKS' region motif. Position 239 (Lys239) interacts with ATP. The S4 RNA-binding domain occupies 350-417 (IGVLALMVLA…KKRHVLIRPA (68 aa)).

It belongs to the class-I aminoacyl-tRNA synthetase family. TyrS type 1 subfamily. Homodimer.

Its subcellular location is the cytoplasm. The catalysed reaction is tRNA(Tyr) + L-tyrosine + ATP = L-tyrosyl-tRNA(Tyr) + AMP + diphosphate + H(+). Catalyzes the attachment of tyrosine to tRNA(Tyr) in a two-step reaction: tyrosine is first activated by ATP to form Tyr-AMP and then transferred to the acceptor end of tRNA(Tyr). The sequence is that of Tyrosine--tRNA ligase from Brucella suis biovar 1 (strain 1330).